The primary structure comprises 437 residues: UDP-N-acetylmuramoylalanine--D-glutamate ligase (437 aa).

112–118 (GSNGKST) contributes to the ATP binding site.

This sequence belongs to the MurCDEF family.

The protein localises to the cytoplasm. The enzyme catalyses UDP-N-acetyl-alpha-D-muramoyl-L-alanine + D-glutamate + ATP = UDP-N-acetyl-alpha-D-muramoyl-L-alanyl-D-glutamate + ADP + phosphate + H(+). The protein operates within cell wall biogenesis; peptidoglycan biosynthesis. Functionally, cell wall formation. Catalyzes the addition of glutamate to the nucleotide precursor UDP-N-acetylmuramoyl-L-alanine (UMA). This is UDP-N-acetylmuramoylalanine--D-glutamate ligase from Haemophilus influenzae (strain PittEE).